The following is a 355-amino-acid chain: DNA polymerase IV (355 aa).

The region spanning 7-188 is the UmuC domain; the sequence is IIHIDMDCFY…LPVRKLFGVG (182 aa). 2 residues coordinate Mg(2+): aspartate 11 and aspartate 106. The active site involves glutamate 107.

Belongs to the DNA polymerase type-Y family. In terms of assembly, monomer. Requires Mg(2+) as cofactor.

The protein resides in the cytoplasm. It carries out the reaction DNA(n) + a 2'-deoxyribonucleoside 5'-triphosphate = DNA(n+1) + diphosphate. Poorly processive, error-prone DNA polymerase involved in untargeted mutagenesis. Copies undamaged DNA at stalled replication forks, which arise in vivo from mismatched or misaligned primer ends. These misaligned primers can be extended by PolIV. Exhibits no 3'-5' exonuclease (proofreading) activity. May be involved in translesional synthesis, in conjunction with the beta clamp from PolIII. This is DNA polymerase IV from Legionella pneumophila (strain Corby).